A 435-amino-acid polypeptide reads, in one-letter code: Ribosomal protein uS12 methylthiotransferase RimO (435 aa).

Positions 2 to 118 constitute an MTTase N-terminal domain; it reads KKFHIVKLGC…IVEKIENGEY (117 aa). Residues C11, C47, C81, C150, C154, and C157 each contribute to the [4Fe-4S] cluster site. The Radical SAM core domain maps to 136 to 364; the sequence is IPDSHYAYVK…MTVQSEISKN (229 aa). In terms of domain architecture, TRAM spans 367-435; sequence EKYIGETLEV…EYDLEGEIVE (69 aa).

The protein belongs to the methylthiotransferase family. RimO subfamily. The cofactor is [4Fe-4S] cluster.

The protein resides in the cytoplasm. The catalysed reaction is L-aspartate(89)-[ribosomal protein uS12]-hydrogen + (sulfur carrier)-SH + AH2 + 2 S-adenosyl-L-methionine = 3-methylsulfanyl-L-aspartate(89)-[ribosomal protein uS12]-hydrogen + (sulfur carrier)-H + 5'-deoxyadenosine + L-methionine + A + S-adenosyl-L-homocysteine + 2 H(+). In terms of biological role, catalyzes the methylthiolation of an aspartic acid residue of ribosomal protein uS12. This chain is Ribosomal protein uS12 methylthiotransferase RimO, found in Petrotoga mobilis (strain DSM 10674 / SJ95).